Reading from the N-terminus, the 139-residue chain is Small ribosomal subunit protein uS12m (139 aa).

Residues 1-21 are disordered; that stretch reads MLSTLYQNDLKKKRNRRRNRS. Over residues 11–20 the composition is skewed to basic residues; that stretch reads KKKRNRRRNR.

Belongs to the universal ribosomal protein uS12 family.

The protein localises to the mitochondrion. In terms of biological role, protein S12 is involved in the translation initiation step. This chain is Small ribosomal subunit protein uS12m (RPS12), found in Paramecium tetraurelia.